Reading from the N-terminus, the 399-residue chain is P2X purinoceptor 1 (399 aa).

The Cytoplasmic segment spans residues 1–28 (MARRLQDELSAFFFEYDTPRMVLVRNKK). A helical transmembrane segment spans residues 29-50 (VGVIFRLIQLVVLVYVIGWVFV). Over 51 to 338 (YEKGYQTSSG…IPTMTTIGSG (288 aa)) the chain is Extracellular. CTP contacts are provided by Lys68, Lys70, and Lys140. Lys70 contributes to the ATP binding site. 3 disulfide bridges follow: Cys117–Cys165, Cys126–Cys149, and Cys132–Cys159. 2 N-linked (GlcNAc...) asparagine glycosylation sites follow: Asn153 and Asn184. Thr186 serves as a coordination point for CTP. Thr186 contributes to the ATP binding site. Residue Asn210 is glycosylated (N-linked (GlcNAc...) asparagine). 2 cysteine pairs are disulfide-bonded: Cys217–Cys227 and Cys261–Cys270. Residues Ser286, Asn290, and Arg292 each contribute to the ATP site. Positions 290 and 292 each coordinate CTP. A glycan (N-linked (GlcNAc...) asparagine) is linked at Asn300. Lys309 lines the CTP pocket. Lys309 provides a ligand contact to ATP. A pore-forming motif region spans residues 331–338 (TMTTIGSG). A helical transmembrane segment spans residues 339-358 (IGIFGVATVLCDLLLLHILP). Topologically, residues 359–399 (KRHYYKQKKFKYAEDMGPGEGERDPAATSSTLGLQENMRTS) are cytoplasmic. Residues 374–399 (MGPGEGERDPAATSSTLGLQENMRTS) form a disordered region. Positions 385–399 (ATSSTLGLQENMRTS) are enriched in polar residues. 2 positions are modified to phosphoserine: Ser387 and Ser388. Thr389 carries the post-translational modification Phosphothreonine.

The protein belongs to the P2X receptor family. As to quaternary structure, functional P2XRs are organized as homomeric and heteromeric trimers. Forms heterodimer with P2RX2. Forms heterodimer with P2RX4. Forms heterodimer with P2RX5. Expressed in smooth muscle of the bladder and arteries.

It is found in the cell membrane. The catalysed reaction is Ca(2+)(in) = Ca(2+)(out). It carries out the reaction K(+)(in) = K(+)(out). It catalyses the reaction Na(+)(in) = Na(+)(out). Its activity is regulated as follows. Activated by low concentrations of ATP (&lt;1 uM). Undergoes rapid desensitisation. Sensitives to the ATP agonist:alpha/beta-methylene-ATP. Modulated by cholesterol. In terms of biological role, ATP-gated nonselective transmembrane cation channel permeable to potassium, sodium and with relatively high calcium permeability. Furthermore, CTP functions as a weak affinity agonist for P2RX1. Plays a role in male fertility, bladder contraction and platelet aggregation. Specifically, plays an important role in neurogenic contraction of smooth muscle of the vas deferens, and therefore is essential for normal male reproductive function. In addition, contributes to smooth muscle contractions of the urinary bladder. On platelets, contributes to platelet activation and aggregation and thereby, also to thrombosis. On neutrophils, it is involved in chemotaxis and in mitigating the activation of circulating cells. This is P2X purinoceptor 1 (P2rx1) from Mus musculus (Mouse).